We begin with the raw amino-acid sequence, 443 residues long: Deoxyguanosinetriphosphate triphosphohydrolase-like protein (443 aa).

The HD domain occupies 61-246; that stretch reads RLTHSLEVAC…MEAADDICYG (186 aa).

It belongs to the dGTPase family. Type 3 subfamily.

In Pseudomonas aeruginosa (strain LESB58), this protein is Deoxyguanosinetriphosphate triphosphohydrolase-like protein.